A 1085-amino-acid polypeptide reads, in one-letter code: Kinesin-like protein cut7 (1085 aa).

Positions 1–70 (MAPRVAPGGS…TDHALHDENE (70 aa)) are disordered. Polar residues predominate over residues 24–37 (PVSTPNSHFRSASN). The 350-residue stretch at 72 to 421 (NINVVVRVRG…LEYAARAKSI (350 aa)) folds into the Kinesin motor domain. An ATP-binding site is contributed by 159-166 (GQTGTGKT). Coiled coils occupy residues 436–604 (LIKD…WNLK), 715–740 (ISSELIELQKDMKESYRQLVQELRSL), and 897–955 (LALA…DSIK). 2 repeats span residues 987–998 (DESLCNLETTIE) and 999–1010 (DTSLVKLETTGD). Phosphothreonine; by CDC2 is present on Thr1011. The disordered stretch occupies residues 1049 to 1085 (YTSSNQTNEPDVYDKPSNSSRTSLLRSSRSAYSKMKR). Positions 1065–1078 (SNSSRTSLLRSSRS) are enriched in low complexity.

The protein belongs to the TRAFAC class myosin-kinesin ATPase superfamily. Kinesin family. BimC subfamily.

It is found in the cytoplasm. It localises to the cytoskeleton. The protein localises to the microtubule organizing center. The protein resides in the spindle pole body. Functionally, could be a spindle pole body motor. On transition from G2 to M phase of the cell cycle, the spindle pole body duplicates; the daughter pole bodies seed microtubules which interdigitate to form a short spindle that elongates to span the nucleus at metaphase. Mutations at cut7 block spindle formation. In Schizosaccharomyces pombe (strain 972 / ATCC 24843) (Fission yeast), this protein is Kinesin-like protein cut7 (cut7).